Reading from the N-terminus, the 688-residue chain is Phosphoinositide 3-phosphatase (688 aa).

The 483-residue stretch at 155–637 (SWDIYDPIKE…KKVQWWWQLY (483 aa)) folds into the Myotubularin phosphatase domain. Catalysis depends on cysteine 397, which acts as the Phosphocysteine intermediate. Positions 647-668 (ELRHKRDSVPISVDKKSKEHSN) are enriched in basic and acidic residues. A disordered region spans residues 647–672 (ELRHKRDSVPISVDKKSKEHSNSDGG).

It belongs to the protein-tyrosine phosphatase family. Non-receptor class myotubularin subfamily.

The protein resides in the cytoplasm. It carries out the reaction a 1,2-diacyl-sn-glycero-3-phospho-(1D-myo-inositol-3-phosphate) + H2O = a 1,2-diacyl-sn-glycero-3-phospho-(1D-myo-inositol) + phosphate. Lipid phosphatase which dephosphorylates phosphatidylinositol 3-monophosphate (PI3P). Involved in the control of PI3P-dependent signaling and in the maintenance of endosomal system integrity. The protein is Phosphoinositide 3-phosphatase of Saccharomyces cerevisiae (strain ATCC 204508 / S288c) (Baker's yeast).